A 558-amino-acid chain; its full sequence is Oxygen-dependent choline dehydrogenase (558 aa).

8 to 37 (DYIIIGAGSAGNVLATRLTEDSDVSVLLLE) is a binding site for FAD. The Proton acceptor role is filled by H475.

This sequence belongs to the GMC oxidoreductase family. Requires FAD as cofactor.

The enzyme catalyses choline + A = betaine aldehyde + AH2. The catalysed reaction is betaine aldehyde + NAD(+) + H2O = glycine betaine + NADH + 2 H(+). It functions in the pathway amine and polyamine biosynthesis; betaine biosynthesis via choline pathway; betaine aldehyde from choline (cytochrome c reductase route): step 1/1. Involved in the biosynthesis of the osmoprotectant glycine betaine. Catalyzes the oxidation of choline to betaine aldehyde and betaine aldehyde to glycine betaine at the same rate. The sequence is that of Oxygen-dependent choline dehydrogenase from Chromohalobacter salexigens (strain ATCC BAA-138 / DSM 3043 / CIP 106854 / NCIMB 13768 / 1H11).